The sequence spans 144 residues: uncharacterized protein (144 aa).

The region spanning 1–58 (MDLASLNAFIAVAETGSFSEAGERLHLTQPAVSKRIAALEQQLQVRLFDRLGREVRLT) is the HTH lysR-type domain. The H-T-H motif DNA-binding region spans 18-38 (FSEAGERLHLTQPAVSKRIAA).

The protein belongs to the LysR transcriptional regulatory family.

This is an uncharacterized protein from Azotobacter vinelandii.